The sequence spans 253 residues: 5'/3'-nucleotidase SurE (253 aa).

A divalent metal cation contacts are provided by D8, D9, S39, and N92.

It belongs to the SurE nucleotidase family. It depends on a divalent metal cation as a cofactor.

The protein localises to the cytoplasm. It catalyses the reaction a ribonucleoside 5'-phosphate + H2O = a ribonucleoside + phosphate. The catalysed reaction is a ribonucleoside 3'-phosphate + H2O = a ribonucleoside + phosphate. It carries out the reaction [phosphate](n) + H2O = [phosphate](n-1) + phosphate + H(+). Its function is as follows. Nucleotidase with a broad substrate specificity as it can dephosphorylate various ribo- and deoxyribonucleoside 5'-monophosphates and ribonucleoside 3'-monophosphates with highest affinity to 3'-AMP. Also hydrolyzes polyphosphate (exopolyphosphatase activity) with the preference for short-chain-length substrates (P20-25). Might be involved in the regulation of dNTP and NTP pools, and in the turnover of 3'-mononucleotides produced by numerous intracellular RNases (T1, T2, and F) during the degradation of various RNAs. This is 5'/3'-nucleotidase SurE from Shigella boydii serotype 18 (strain CDC 3083-94 / BS512).